The sequence spans 575 residues: Physarolisin (575 aa).

An N-terminal signal peptide occupies residues 1 to 18; the sequence is MRLLSLLFLLGLATLSFA. A propeptide spans 19–173 (removed in mature form); sequence VRSQWAQQGR…SIKNARTQVG (155 aa). The 396-residue stretch at 179–574 folds into the Peptidase S53 domain; the sequence is YIVPYVIFDL…SKLLAFVQTL (396 aa). The N-linked (GlcNAc...) asparagine glycan is linked to Asn200. Catalysis depends on charge relay system residues Glu248 and Asp252. Asn262, Asn307, Asn380, and Asn453 each carry an N-linked (GlcNAc...) asparagine glycan. Residue Ser484 is the Charge relay system of the active site. Ca(2+) is bound by residues Asp529, Ile530, Gly552, and Asp554.

It depends on Ca(2+) as a cofactor. Post-translationally, autocatalytically processed. N-glycosylated.

The enzyme catalyses Milk clotting activity. Preferential cleavage of 8-Gly-|-Ser-9 in B chain of insulin most rapidly, followed by 11-Leu-|-Val-12, 19-Cys(SO(3)H)-|-Gly and 24-Phe-|-Phe-25. No action on Ac-Phe-Tyr(I)2.. Inhibited by diisopropylfluorophosphate (DFP) and diazoacetyl-D,L-norleucine methyl ester (DAN). In Physarum polycephalum (Slime mold), this protein is Physarolisin.